Reading from the N-terminus, the 349-residue chain is Alanine racemase (349 aa).

Residue Lys-35 is the Proton acceptor; specific for D-alanine of the active site. Lys-35 is subject to N6-(pyridoxal phosphate)lysine. Position 130 (Arg-130) interacts with substrate. Tyr-244 (proton acceptor; specific for L-alanine) is an active-site residue. Residue Met-292 coordinates substrate.

It belongs to the alanine racemase family. Pyridoxal 5'-phosphate is required as a cofactor.

It catalyses the reaction L-alanine = D-alanine. Its pathway is amino-acid biosynthesis; D-alanine biosynthesis; D-alanine from L-alanine: step 1/1. Catalyzes the interconversion of L-alanine and D-alanine. May also act on other amino acids. This Cereibacter sphaeroides (strain ATCC 17023 / DSM 158 / JCM 6121 / CCUG 31486 / LMG 2827 / NBRC 12203 / NCIMB 8253 / ATH 2.4.1.) (Rhodobacter sphaeroides) protein is Alanine racemase (alr).